Consider the following 66-residue polypeptide: Large ribosomal subunit protein bL35 (66 aa).

The protein belongs to the bacterial ribosomal protein bL35 family.

This is Large ribosomal subunit protein bL35 from Hyphomonas neptunium (strain ATCC 15444).